We begin with the raw amino-acid sequence, 116 residues long: MSVETFTPTGLEFTHGAAQKVKNLVNEEGNERLKLRVFVTGGGCSGFQYGFTFDEDVAEDDTIVEREGVSLVVDPMSFQYLAGAEVDYQEGLEGSRFVIKNPNAATTCGCGSSFSI.

The iron-sulfur cluster site is built by C44, C108, and C110.

The protein belongs to the HesB/IscA family. As to quaternary structure, homodimer. The cofactor is iron-sulfur cluster.

Its function is as follows. Required for insertion of 4Fe-4S clusters for at least IspG. This chain is Iron-sulfur cluster insertion protein ErpA, found in Pseudomonas putida (strain ATCC 47054 / DSM 6125 / CFBP 8728 / NCIMB 11950 / KT2440).